The sequence spans 206 residues: Interleukin-24 (206 aa).

The N-terminal stretch at 1-51 (MNFQQRLQSLWTLARPFCPPLLATASQMQMVVLPCLGFTLLLWSQVSGAQG) is a signal peptide. Cysteines 59 and 106 form a disulfide. N-linked (GlcNAc...) asparagine glycans are attached at residues asparagine 85 and asparagine 99. Lysine 122 participates in a covalent cross-link: Glycyl lysine isopeptide (Lys-Gly) (interchain with G-Cter in ubiquitin). An N-linked (GlcNAc...) asparagine glycan is attached at asparagine 126.

This sequence belongs to the IL-10 family. Post-translationally, glycosylated. Ubiquitination at Lys-122 promotes proteasomal degradation. As to expression, up-regulated in melanoma cells induced to terminally differentiate.

Its subcellular location is the secreted. Functionally, multifunctional cytokine mainly produced by T-cells that plays a regulatory role in immune response, tissue homeostasis, host defense, and oncogenesis. Possesses antiviral functions and induces the type I interferon response during influenza infection. Signals through two receptor complexes IL20RA/IL20RB or IL20RB/IL22RA1. In turn, stimulates the JAK1-STAT3 and MAPK pathways and promotes the secretion of pro-inflammatory mediators including IL8 and MMP1. Intracellularly, maintains endoplasmic reticulum homeostasis by restricting the eIF2alpha-CHOP pathway-mediated stress signal. In addition, acts as a quality control mechanism for the ubiquitin proteasome system by alerting the cell to proteasome dysfunction through activation of PKR/EIF2AK2. The sequence is that of Interleukin-24 (IL24) from Homo sapiens (Human).